The primary structure comprises 701 residues: Elongation factor G (701 aa).

The tr-type G domain occupies G8 to T291. GTP-binding positions include A17–T24, D89–H93, and N143–D146.

This sequence belongs to the TRAFAC class translation factor GTPase superfamily. Classic translation factor GTPase family. EF-G/EF-2 subfamily.

It is found in the cytoplasm. In terms of biological role, catalyzes the GTP-dependent ribosomal translocation step during translation elongation. During this step, the ribosome changes from the pre-translocational (PRE) to the post-translocational (POST) state as the newly formed A-site-bound peptidyl-tRNA and P-site-bound deacylated tRNA move to the P and E sites, respectively. Catalyzes the coordinated movement of the two tRNA molecules, the mRNA and conformational changes in the ribosome. The polypeptide is Elongation factor G (Pseudomonas savastanoi pv. phaseolicola (strain 1448A / Race 6) (Pseudomonas syringae pv. phaseolicola (strain 1448A / Race 6))).